Here is a 141-residue protein sequence, read N- to C-terminus: Large ribosomal subunit protein uL23B (141 aa).

The segment at 1-22 (MSVGKAKGAQKTVQKGIHNKVA) is disordered.

The protein belongs to the universal ribosomal protein uL23 family. Component of the large ribosomal subunit (LSU). Mature yeast ribosomes consist of a small (40S) and a large (60S) subunit. The 40S small subunit contains 1 molecule of ribosomal RNA (18S rRNA) and at least 33 different proteins. The large 60S subunit contains 3 rRNA molecules (25S, 5.8S and 5S rRNA) and at least 46 different proteins. uL23 is associated with the polypeptide exit tunnel.

The protein resides in the cytoplasm. Functionally, this protein binds to a specific region on the 26S rRNA. Its function is as follows. Component of the ribosome, a large ribonucleoprotein complex responsible for the synthesis of proteins in the cell. The small ribosomal subunit (SSU) binds messenger RNAs (mRNAs) and translates the encoded message by selecting cognate aminoacyl-transfer RNA (tRNA) molecules. The large subunit (LSU) contains the ribosomal catalytic site termed the peptidyl transferase center (PTC), which catalyzes the formation of peptide bonds, thereby polymerizing the amino acids delivered by tRNAs into a polypeptide chain. The nascent polypeptides leave the ribosome through a tunnel in the LSU and interact with protein factors that function in enzymatic processing, targeting, and the membrane insertion of nascent chains at the exit of the ribosomal tunnel. uL23 is a major component of the universal docking site for these factors at the polypeptide exit tunnel. The protein is Large ribosomal subunit protein uL23B (rpl2502) of Schizosaccharomyces pombe (strain 972 / ATCC 24843) (Fission yeast).